We begin with the raw amino-acid sequence, 242 residues long: Polycomb group RING finger protein 3 (242 aa).

An RING-type zinc finger spans residues 17–56; sequence CRLCSGYLIDATTVTECLHTFCRSCLVKYLEENNTCPTCR. Residues 115–149 are disordered; it reads AKQHLDSHRNGETKADDSSNKEAAEEKPEEDNDYH. A compositionally biased stretch (basic and acidic residues) spans 117 to 140; it reads QHLDSHRNGETKADDSSNKEAAEE. Residues 132–242 form an interaction with BCORL1 region; sequence SSNKEAAEEK…LHYRPKMDLL (111 aa).

In terms of assembly, component of a PRC1-like complex that contains PCGF3, RNF2 and RYBP. Interacts with CBX6, CBX7 and CBX8. Interacts with BCORL1.

It localises to the nucleus. It is found in the nucleoplasm. Its function is as follows. Component of a Polycomb group (PcG) multiprotein PRC1-like complex, a complex class required to maintain the transcriptionally repressive state of many genes, including Hox genes, throughout development. PcG PRC1 complex acts via chromatin remodeling and modification of histones; it mediates monoubiquitination of histone H2A 'Lys-119', rendering chromatin heritably changed in its expressibility. Within the PRC1-like complex, regulates RNF2 ubiquitin ligase activity. Plays a redundant role with PCGF5 as part of a PRC1-like complex that mediates monoubiquitination of histone H2A 'Lys-119' on the X chromosome and is required for normal silencing of one copy of the X chromosome in XX females. This Homo sapiens (Human) protein is Polycomb group RING finger protein 3 (PCGF3).